Here is a 398-residue protein sequence, read N- to C-terminus: Probable aminomethyltransferase (398 aa).

This sequence belongs to the GcvT family. The glycine cleavage system is composed of four proteins: P, T, L and H.

The catalysed reaction is N(6)-[(R)-S(8)-aminomethyldihydrolipoyl]-L-lysyl-[protein] + (6S)-5,6,7,8-tetrahydrofolate = N(6)-[(R)-dihydrolipoyl]-L-lysyl-[protein] + (6R)-5,10-methylene-5,6,7,8-tetrahydrofolate + NH4(+). Its function is as follows. The glycine cleavage system catalyzes the degradation of glycine. This chain is Probable aminomethyltransferase, found in Pyrococcus furiosus (strain ATCC 43587 / DSM 3638 / JCM 8422 / Vc1).